Here is a 301-residue protein sequence, read N- to C-terminus: Asialoglycoprotein receptor 2 (301 aa).

Positions M1–Q43 are disordered. The Cytoplasmic portion of the chain corresponds to M1–R58. Position 13 is a phosphoserine (S13). The segment covering N16–H39 has biased composition (basic and acidic residues). A lipid anchor (S-palmitoyl cysteine) is attached at C54. Residues L59–S79 traverse the membrane as a helical; Signal-anchor for type II membrane protein segment. The Extracellular segment spans residues Q80–H301. Residues N97 and N165 are each glycosylated (N-linked (GlcNAc...) asparagine). One can recognise a C-type lectin domain in the interval C169 to K295. 3 disulfides stabilise this stretch: C170–C181, C198–C293, and C271–C285. The N-linked (GlcNAc...) asparagine glycan is linked to N298.

In terms of assembly, interacts with LASS2. Expressed exclusively in hepatic parenchymal cells.

It localises to the membrane. In terms of biological role, mediates the endocytosis of plasma glycoproteins to which the terminal sialic acid residue on their complex carbohydrate moieties has been removed. The receptor recognizes terminal galactose and N-acetylgalactosamine units. After ligand binding to the receptor, the resulting complex is internalized and transported to a sorting organelle, where receptor and ligand are disassociated. The receptor then returns to the cell membrane surface. This Mus musculus (Mouse) protein is Asialoglycoprotein receptor 2 (Asgr2).